Reading from the N-terminus, the 198-residue chain is Na(+)-translocating NADH-quinone reductase subunit E (198 aa).

Helical transmembrane passes span 11–31, 35–55, 77–97, 110–130, 140–160, and 176–196; these read SVFI…FLAV, VSTS…AVPV, FLNF…LEMF, GIFL…SFMV, VVYG…LAGL, and LGIT…FSGI.

Belongs to the NqrDE/RnfAE family. Composed of six subunits; NqrA, NqrB, NqrC, NqrD, NqrE and NqrF.

Its subcellular location is the cell inner membrane. The enzyme catalyses a ubiquinone + n Na(+)(in) + NADH + H(+) = a ubiquinol + n Na(+)(out) + NAD(+). NQR complex catalyzes the reduction of ubiquinone-1 to ubiquinol by two successive reactions, coupled with the transport of Na(+) ions from the cytoplasm to the periplasm. NqrA to NqrE are probably involved in the second step, the conversion of ubisemiquinone to ubiquinol. The sequence is that of Na(+)-translocating NADH-quinone reductase subunit E from Actinobacillus succinogenes (strain ATCC 55618 / DSM 22257 / CCUG 43843 / 130Z).